The sequence spans 508 residues: BTB/POZ domain-containing protein At3g03510 (508 aa).

A BTB domain is found at 11-77 (QDLDLYVKGV…CYGYKIELSA (67 aa)). Positions 156-414 (TRLLQDLITL…MQVLFVSQMQ (259 aa)) constitute an NPH3 domain. Phosphotyrosine is present on Tyr355.

It belongs to the NPH3 family.

The protein operates within protein modification; protein ubiquitination. Its function is as follows. May act as a substrate-specific adapter of an E3 ubiquitin-protein ligase complex (CUL3-RBX1-BTB) which mediates the ubiquitination and subsequent proteasomal degradation of target proteins. This Arabidopsis thaliana (Mouse-ear cress) protein is BTB/POZ domain-containing protein At3g03510.